The chain runs to 417 residues: Phosphoglycerate kinase 2 (417 aa).

S2 is modified (N-acetylserine). Phosphoserine occurs at positions 2 and 4. Residue K11 is modified to N6-acetyllysine. (2R)-3-phosphoglycerate is bound by residues V23, D24, F25, N26, Q38, and R39. K48 is modified (N6-acetyllysine). Positions 62, 63, 65, and 66 each coordinate (2R)-3-phosphoglycerate. K75, K86, and K97 each carry N6-acetyllysine. L122 and R123 together coordinate (2R)-3-phosphoglycerate. An N6-acetyllysine mark is found at K131 and K146. (2R)-3-phosphoglycerate-binding residues include H170 and R171. Phosphotyrosine is present on Y196. At K199 the chain carries N6-acetyllysine. G214 contributes to the ADP binding site. G214 serves as a coordination point for CDP. The AMP site is built by A215 and K216. A215 contacts ATP. A215 contacts Mg(2+). A218 and D219 together coordinate Mg(2+). D219 is a CDP binding site. An AMP-binding site is contributed by K220. K220 provides a ligand contact to ATP. Residue G238 participates in ADP binding. A CDP-binding site is contributed by G238. G239 contributes to the AMP binding site. G239 contacts ATP. N6-acetyllysine is present on residues K267 and K291. G313 is a binding site for AMP. G313 contacts ATP. The CDP site is built by G338, V340, and F343. Residue F343 participates in ADP binding. E344 contributes to the AMP binding site. Positions 344, 375, and 376 each coordinate ATP. D375 is a Mg(2+) binding site.

It belongs to the phosphoglycerate kinase family. In terms of assembly, monomer. Mg(2+) is required as a cofactor.

The protein resides in the cytoplasm. It catalyses the reaction (2R)-3-phosphoglycerate + ATP = (2R)-3-phospho-glyceroyl phosphate + ADP. It participates in carbohydrate degradation; glycolysis; pyruvate from D-glyceraldehyde 3-phosphate: step 2/5. Functionally, essential for sperm motility and male fertility but is not required for the completion of spermatogenesis. The chain is Phosphoglycerate kinase 2 (PGK2) from Equus caballus (Horse).